The chain runs to 359 residues: Peptide chain release factor 1 (359 aa).

Gln235 carries the N5-methylglutamine modification. A disordered region spans residues 283 to 309 (QKAESERSQARRSQVGSGDRSERIRTY).

It belongs to the prokaryotic/mitochondrial release factor family. In terms of processing, methylated by PrmC. Methylation increases the termination efficiency of RF1.

The protein resides in the cytoplasm. Functionally, peptide chain release factor 1 directs the termination of translation in response to the peptide chain termination codons UAG and UAA. The polypeptide is Peptide chain release factor 1 (Brucella canis (strain ATCC 23365 / NCTC 10854 / RM-666)).